The following is a 45-amino-acid chain: Large ribosomal subunit protein bL36 (45 aa).

Positions 1–45 are disordered; it reads MKVSSSIKADPSKGDKLVRRKGRLYVINKKDPNRKQRQAGPARKK.

It belongs to the bacterial ribosomal protein bL36 family.

In Chlamydia caviae (strain ATCC VR-813 / DSM 19441 / 03DC25 / GPIC) (Chlamydophila caviae), this protein is Large ribosomal subunit protein bL36.